The sequence spans 148 residues: Proteasome chaperone 4 (148 aa).

Belongs to the PSMG4 family. In terms of assembly, component of the 20S proteasome chaperone. Forms a heterodimer with IRC25 that binds to proteasome precursors. Interacts with POP2.

The protein localises to the cytoplasm. Its function is as follows. Involved in 20S proteasome assembly, facilitating the alpha-ring formation. Involved in maintenance of telomere length. This chain is Proteasome chaperone 4 (POC4), found in Saccharomyces cerevisiae (strain ATCC 204508 / S288c) (Baker's yeast).